The chain runs to 119 residues: Probable cyclase otaY (119 aa).

It belongs to the aurE cyclase family.

It participates in mycotoxin biosynthesis. Functionally, probable cyclase; part of the gene cluster that mediates the biosynthesis of ochratoxin A (OTA), a mycotoxin composed of a chlorinated type I polyketide dihydroisocoumarin moiety linked to L-phenylalanine, and demonstrated to have nephrotoxic, immunotoxic, genotoxic, neurotoxic, and teratogenic properties. OtaY is probably involved in the polyketide cyclization. The pathway begins with the highly reducing polyketide synthase otaA that catalyzes the formation of the isocoumarin group during the initial stages of biosynthesis, starting from one acetate and 4 malonate units, to originate the characteristic pentaketide skeleton 7-methylmellein (7-MM) of the OTA molecule. The newly identified cyclase otaY might be involved in the polyketide cyclization reaction during the initial steps of the OTA biosynthesis. 7-MM is then oxidized into 7-carboxymellein (also called ochratoxin beta) by the cytochrome P450 monooxygenase otaC. The NRPS encoded by the otaB gene is involved in the linking of phenylalanine to the dihydroisocoumarin ring. The reaction catalyzed by NRPS results in the production of ochratoxin B (OTB), which is the non-chlorinated analog of OTA and which subsequently serves as the substrate of the halogenase otaD for chlorination activity to form the final molecular structure of OTA, containing a chlorine atom in the C-5 position of the molecule. This is Probable cyclase otaY from Aspergillus niger (strain ATCC MYA-4892 / CBS 513.88 / FGSC A1513).